The sequence spans 147 residues: NADH-quinone oxidoreductase subunit A (147 aa).

3 helical membrane-spanning segments follow: residues 11–31, 68–88, and 93–113; these read IWPLVAYFFLVVMLVVGVMAL, LIAVFFVIFDVEAVFLFAWAV, and LGWPGYIEAIIFISILGAALA.

It belongs to the complex I subunit 3 family. NDH-1 is composed of 14 different subunits. Subunits NuoA, H, J, K, L, M, N constitute the membrane sector of the complex.

The protein localises to the cell inner membrane. It carries out the reaction a quinone + NADH + 5 H(+)(in) = a quinol + NAD(+) + 4 H(+)(out). Its function is as follows. NDH-1 shuttles electrons from NADH, via FMN and iron-sulfur (Fe-S) centers, to quinones in the respiratory chain. The immediate electron acceptor for the enzyme in this species is believed to be ubiquinone. Couples the redox reaction to proton translocation (for every two electrons transferred, four hydrogen ions are translocated across the cytoplasmic membrane), and thus conserves the redox energy in a proton gradient. This chain is NADH-quinone oxidoreductase subunit A, found in Nitrosospira multiformis (strain ATCC 25196 / NCIMB 11849 / C 71).